The chain runs to 256 residues: GDSL esterase/lipase CPRD49 (256 aa).

An N-terminal signal peptide occupies residues 1 to 27; sequence MVGPARPQIVLFGSSIVQMSFGHGGWG. S15 (nucleophile) is an active-site residue. N49 and N79 each carry an N-linked (GlcNAc...) asparagine glycan. The active site involves H213. A glycan (N-linked (GlcNAc...) asparagine) is linked at N243.

It belongs to the 'GDSL' lipolytic enzyme family. Specifically expressed in anthers (stages 8-12).

The protein resides in the secreted. In Arabidopsis thaliana (Mouse-ear cress), this protein is GDSL esterase/lipase CPRD49 (CPRD49).